Consider the following 203-residue polypeptide: Thymidylate kinase (203 aa).

10–17 contributes to the ATP binding site; that stretch reads GMDGAGKS.

Belongs to the thymidylate kinase family.

The catalysed reaction is dTMP + ATP = dTDP + ADP. Its function is as follows. Phosphorylation of dTMP to form dTDP in both de novo and salvage pathways of dTTP synthesis. This Methylobacillus flagellatus (strain ATCC 51484 / DSM 6875 / VKM B-1610 / KT) protein is Thymidylate kinase.